The chain runs to 511 residues: DEP domain-containing protein 7 (511 aa).

One can recognise a DEP domain in the interval 46 to 136; it reads LQTQVEVKKR…SSCSLYRFTT (91 aa).

The protein belongs to the DEPDC7 family. Expressed in liver.

This Homo sapiens (Human) protein is DEP domain-containing protein 7 (DEPDC7).